A 139-amino-acid polypeptide reads, in one-letter code: Cystatin cpi-1 (139 aa).

The signal sequence occupies residues 1–19; that stretch reads MRFILLIALVFAVLDGINC. Asparagine 29 carries N-linked (GlcNAc...) asparagine glycosylation. Positions 65-69 match the Secondary area of contact motif; it reads QVVAG. Cysteine 83 and cysteine 99 form a disulfide bridge.

This sequence belongs to the cystatin family.

Cysteine protease inhibitor which inhibits members of the peptidase C1 family. Does not inhibit asparaginyl endopeptidase. May play a protective role against exogenous cysteine proteases derived from soil bacteria or fungi, or rotting fruits and vegetation. This is Cystatin cpi-1 from Caenorhabditis elegans.